Here is a 236-residue protein sequence, read N- to C-terminus: Small ribosomal subunit protein uS2c (236 aa).

Belongs to the universal ribosomal protein uS2 family.

The protein resides in the plastid. The protein localises to the chloroplast. This Saccharum hybrid (Sugarcane) protein is Small ribosomal subunit protein uS2c (rps2).